The chain runs to 873 residues: Protein SEY1 (873 aa).

The disordered stretch occupies residues 1–21 (MVANGHFAGSADGQDSSSYEH). Residues 1–749 (MVANGHFAGS…KRSAIGGITQ (749 aa)) lie on the Cytoplasmic side of the membrane. The GB1/RHD3-type G domain occupies 49–307 (GFNYHLISVF…IPADGFAVYA (259 aa)). 59 to 66 (GSQSTGKS) contacts GTP. The stretch at 482–506 (SNYQQELSLYQKDLERTSGQLRRDE) forms a coiled coil. The interval 676–703 (LDKWIGHTPSSATPADEEDLTPIGGVDD) is disordered. Residues 690-703 (ADEEDLTPIGGVDD) show a composition bias toward acidic residues. A helical transmembrane segment spans residues 750–770 (VPLYFYGLLFALGWNEILAVL). Residues 771–773 (RNP) lie on the Lumenal side of the membrane. Residues 774–794 (VYFLLLFVCAIGAYITYQLNL) traverse the membrane as a helical segment. Residues 795–873 (WGPIIKMTEA…EDVDDDDDDF (79 aa)) are Cytoplasmic-facing. The interval 828 to 873 (RQAMAMSGARNATEEHEMSRLSRKPAERGGRKNRADEDVDDDDDDF) is disordered. Residues 839–863 (ATEEHEMSRLSRKPAERGGRKNRAD) are compositionally biased toward basic and acidic residues. The span at 864 to 873 (EDVDDDDDDF) shows a compositional bias: acidic residues.

It belongs to the TRAFAC class dynamin-like GTPase superfamily. GB1/RHD3 GTPase family. RHD3 subfamily.

The protein resides in the endoplasmic reticulum membrane. Its function is as follows. Cooperates with the reticulon proteins and tubule-shaping DP1 family proteins to generate and maintain the structure of the tubular endoplasmic reticulum network. Has GTPase activity, which is required for its function in ER organization. This Ajellomyces capsulatus (strain G186AR / H82 / ATCC MYA-2454 / RMSCC 2432) (Darling's disease fungus) protein is Protein SEY1.